The following is a 202-amino-acid chain: Guanylate kinase (202 aa).

In terms of domain architecture, Guanylate kinase-like spans 3–181 (GNLFVVAAPS…ALDDLRAVVR (179 aa)). 10 to 17 (APSGAGKT) lines the ATP pocket.

Belongs to the guanylate kinase family.

It is found in the cytoplasm. It catalyses the reaction GMP + ATP = GDP + ADP. Essential for recycling GMP and indirectly, cGMP. The polypeptide is Guanylate kinase (Dechloromonas aromatica (strain RCB)).